Here is a 250-residue protein sequence, read N- to C-terminus: Low affinity immunoglobulin gamma Fc region receptor III-A (250 aa).

The N-terminal stretch at 1-20 (MWRLLSPTALLLLVSAGTRA) is a signal peptide. Residues 21 to 207 (ADLSKAMVVL…TSTFLPHWYQ (187 aa)) lie on the Extracellular side of the membrane. 2 Ig-like C2-type domains span residues 32-105 (PEWN…LEVH) and 120-189 (EGDT…VNIT). 2 disulfide bridges follow: Cys-47–Cys-89 and Cys-128–Cys-172. N-linked (GlcNAc...) asparagine glycosylation is found at Asn-63, Asn-133, Asn-180, and Asn-187. The helical transmembrane segment at 208–228 (IAFFLVTALLFVVDTGLHVAV) threads the bilayer. Residues 229-250 (QRDLQSSVKEWKDGKVTWSHGP) lie on the Cytoplasmic side of the membrane.

As to quaternary structure, forms a heterooligomeric complex with ITAM-containing signaling subunits FCER1G. Interacts (via transmembrane domain) with signaling subunits; this interaction is a prerequisite for receptor complex expression on the cell surface and intracellular signal transduction. Binds the Fc region of antigen-complexed IgG.

The protein resides in the cell membrane. Its function is as follows. Receptor for the invariable Fc fragment of immunoglobulin gamma (IgG). Optimally activated upon binding of clustered antigen-IgG complexes displayed on cell surfaces, triggers lysis of antibody-coated cells, a process known as antibody-dependent cellular cytotoxicity (ADCC). Does not bind free monomeric IgG, thus avoiding inappropriate effector cell activation in the absence of antigenic trigger. Mediates IgG effector functions on natural killer (NK) cells. Binds antigen-IgG complexes generated upon infection and triggers NK cell-dependent cytokine production and degranulation to limit viral load and propagation. Fc-binding subunit that associates with FCER1G adapter to form functional signaling complexes. Following the engagement of antigen-IgG complexes, triggers phosphorylation of immunoreceptor tyrosine-based activation motif (ITAM)-containing adapter with subsequent activation of phosphatidylinositol 3-kinase signaling and sustained elevation of intracellular calcium that ultimately drive NK cell activation. Mediates enhanced ADCC in response to afucosylated IgGs. This chain is Low affinity immunoglobulin gamma Fc region receptor III-A, found in Felis catus (Cat).